The chain runs to 345 residues: 3-isopropylmalate dehydrogenase (345 aa).

G74 to E87 provides a ligand contact to NAD(+). Substrate-binding residues include R94, R104, R132, and D217. Residues D217, D241, and D245 each contribute to the Mg(2+) site. G274–N286 contributes to the NAD(+) binding site.

Belongs to the isocitrate and isopropylmalate dehydrogenases family. LeuB type 1 subfamily. Homodimer. Mg(2+) is required as a cofactor. It depends on Mn(2+) as a cofactor.

The protein localises to the cytoplasm. The enzyme catalyses (2R,3S)-3-isopropylmalate + NAD(+) = 4-methyl-2-oxopentanoate + CO2 + NADH. The protein operates within amino-acid biosynthesis; L-leucine biosynthesis; L-leucine from 3-methyl-2-oxobutanoate: step 3/4. Catalyzes the oxidation of 3-carboxy-2-hydroxy-4-methylpentanoate (3-isopropylmalate) to 3-carboxy-4-methyl-2-oxopentanoate. The product decarboxylates to 4-methyl-2 oxopentanoate. In Thermus thermophilus (strain ATCC 27634 / DSM 579 / HB8), this protein is 3-isopropylmalate dehydrogenase (leuB).